The chain runs to 176 residues: Crossover junction endodeoxyribonuclease RuvC (176 aa).

Active-site residues include Asp-10, Glu-69, and Asp-141. Residues Asp-10, Glu-69, and Asp-141 each contribute to the Mg(2+) site.

Belongs to the RuvC family. Homodimer which binds Holliday junction (HJ) DNA. The HJ becomes 2-fold symmetrical on binding to RuvC with unstacked arms; it has a different conformation from HJ DNA in complex with RuvA. In the full resolvosome a probable DNA-RuvA(4)-RuvB(12)-RuvC(2) complex forms which resolves the HJ. Mg(2+) serves as cofactor.

The protein localises to the cytoplasm. The catalysed reaction is Endonucleolytic cleavage at a junction such as a reciprocal single-stranded crossover between two homologous DNA duplexes (Holliday junction).. Its function is as follows. The RuvA-RuvB-RuvC complex processes Holliday junction (HJ) DNA during genetic recombination and DNA repair. Endonuclease that resolves HJ intermediates. Cleaves cruciform DNA by making single-stranded nicks across the HJ at symmetrical positions within the homologous arms, yielding a 5'-phosphate and a 3'-hydroxyl group; requires a central core of homology in the junction. The consensus cleavage sequence is 5'-(A/T)TT(C/G)-3'. Cleavage occurs on the 3'-side of the TT dinucleotide at the point of strand exchange. HJ branch migration catalyzed by RuvA-RuvB allows RuvC to scan DNA until it finds its consensus sequence, where it cleaves and resolves the cruciform DNA. The protein is Crossover junction endodeoxyribonuclease RuvC of Dichelobacter nodosus (strain VCS1703A).